A 141-amino-acid chain; its full sequence is Large ribosomal subunit protein uL11 (141 aa).

The protein belongs to the universal ribosomal protein uL11 family. As to quaternary structure, part of the ribosomal stalk of the 50S ribosomal subunit. Interacts with L10 and the large rRNA to form the base of the stalk. L10 forms an elongated spine to which L12 dimers bind in a sequential fashion forming a multimeric L10(L12)X complex. Post-translationally, one or more lysine residues are methylated.

Functionally, forms part of the ribosomal stalk which helps the ribosome interact with GTP-bound translation factors. The sequence is that of Large ribosomal subunit protein uL11 from Prochlorococcus marinus (strain MIT 9313).